The following is a 199-amino-acid chain: Pre T-cell antigen receptor alpha (199 aa).

The signal sequence occupies residues 1-16; sequence MARTWLLLLLGVRCQA. Residues 17–146 are Extracellular-facing; sequence LPSGIAGTPF…PEPLGGTQRQ (130 aa). A disulfide bridge links C47 with C107. N67 and N117 each carry an N-linked (GlcNAc...) asparagine glycan. The helical transmembrane segment at 147–167 threads the bilayer; sequence VLWLSLLRLLLFKLLLLDVLL. Residues 168 to 199 lie on the Cytoplasmic side of the membrane; it reads TCSHLRLHVLAGQHLQPPPSRKSLPPTHRIWT.

Heterodimer with TCRB; disulfide linked. This heterodimer assembles with CD3 proteins into a signaling-competent pre-T-cell receptor complex. Interacts with RHBDD1. Isoform 1 is expressed at higher levels than isoform 2 in the thymus while only isoform 2 is expressed in polyclonal beta-only cells. Isoform 1 shows a predominant expression in immature thymocytes.

Its subcellular location is the membrane. The protein localises to the cell membrane. Functionally, component of the pre-T-cell receptor complex (composed of PTCRA, TCRB and the CD3 complex) that plays a crucial role in early T-cell development, particularly alpha-beta T cell differentiation. Isoform 1 acts to retain most TCRB intracellularly, while isoform 2 permits higher levels of cell surface TCRB expression and facilitates signaling from the CD3-TCRB complex. The protein is Pre T-cell antigen receptor alpha of Mus musculus (Mouse).